The following is a 72-amino-acid chain: uncharacterized protein (72 aa).

It localises to the plastid. It is found in the chloroplast. This is an uncharacterized protein from Oenothera berteroana (Bertero's evening primrose).